Here is a 511-residue protein sequence, read N- to C-terminus: Apolipoprotein N-acyltransferase (511 aa).

A run of 6 helical transmembrane segments spans residues leucine 24–leucine 44, glycine 58–histidine 78, phenylalanine 90–tryptophan 110, leucine 125–phenylalanine 145, valine 163–valine 183, and glycine 192–leucine 212. Positions isoleucine 230–proline 470 constitute a CN hydrolase domain. Glutamate 269 (proton acceptor) is an active-site residue. Lysine 330 is a catalytic residue. Cysteine 382 functions as the Nucleophile in the catalytic mechanism. The helical transmembrane segment at valine 482–leucine 502 threads the bilayer.

The protein belongs to the CN hydrolase family. Apolipoprotein N-acyltransferase subfamily.

The protein resides in the cell inner membrane. The enzyme catalyses N-terminal S-1,2-diacyl-sn-glyceryl-L-cysteinyl-[lipoprotein] + a glycerophospholipid = N-acyl-S-1,2-diacyl-sn-glyceryl-L-cysteinyl-[lipoprotein] + a 2-acyl-sn-glycero-3-phospholipid + H(+). It functions in the pathway protein modification; lipoprotein biosynthesis (N-acyl transfer). Its function is as follows. Catalyzes the phospholipid dependent N-acylation of the N-terminal cysteine of apolipoprotein, the last step in lipoprotein maturation. In Pseudomonas aeruginosa (strain UCBPP-PA14), this protein is Apolipoprotein N-acyltransferase.